The primary structure comprises 405 residues: S-adenosylmethionine synthase (405 aa).

141–146 (GQGSVD) lines the ATP pocket.

It belongs to the AdoMet synthase 2 family. It depends on Mg(2+) as a cofactor.

The catalysed reaction is L-methionine + ATP + H2O = S-adenosyl-L-methionine + phosphate + diphosphate. The protein operates within amino-acid biosynthesis; S-adenosyl-L-methionine biosynthesis; S-adenosyl-L-methionine from L-methionine: step 1/1. Catalyzes the formation of S-adenosylmethionine from methionine and ATP. This is S-adenosylmethionine synthase from Methanococcus maripaludis (strain C5 / ATCC BAA-1333).